The following is a 306-amino-acid chain: Homeobox protein Hox-C13a (306 aa).

A disordered region spans residues 68 to 90 (SVYSDISSPDTGRQCPAPQTSSS). A DNA-binding region (homeobox) is located at residues 236–295 (GRKKRVPYTKLQLKELEKEYAASKFITKDKRRRISAATNLSERQVTIWFQNRRVKEKKFI).

It belongs to the Abd-B homeobox family.

It localises to the nucleus. Sequence-specific transcription factor which is part of a developmental regulatory system that provides cells with specific positional identities on the anterior-posterior axis. This chain is Homeobox protein Hox-C13a (hoxc13a), found in Takifugu rubripes (Japanese pufferfish).